The sequence spans 333 residues: Glycerol-3-phosphate dehydrogenase [NAD(P)+] (333 aa).

Residues Trp12, Lys33, and Lys105 each coordinate NADPH. Sn-glycerol 3-phosphate is bound by residues Lys105, Gly136, and Ser138. Position 140 (Ala140) interacts with NADPH. Sn-glycerol 3-phosphate-binding residues include Lys191, Asp244, Ser254, Arg255, and Asn256. The Proton acceptor role is filled by Lys191. Residue Arg255 coordinates NADPH. Residues Val279 and Glu281 each contribute to the NADPH site.

The protein belongs to the NAD-dependent glycerol-3-phosphate dehydrogenase family.

The protein localises to the cytoplasm. The enzyme catalyses sn-glycerol 3-phosphate + NAD(+) = dihydroxyacetone phosphate + NADH + H(+). It catalyses the reaction sn-glycerol 3-phosphate + NADP(+) = dihydroxyacetone phosphate + NADPH + H(+). Its pathway is membrane lipid metabolism; glycerophospholipid metabolism. Catalyzes the reduction of the glycolytic intermediate dihydroxyacetone phosphate (DHAP) to sn-glycerol 3-phosphate (G3P), the key precursor for phospholipid synthesis. The polypeptide is Glycerol-3-phosphate dehydrogenase [NAD(P)+] (Protochlamydia amoebophila (strain UWE25)).